Consider the following 337-residue polypeptide: Palmitoyltransferase ZDHHC15 (337 aa).

The Cytoplasmic portion of the chain corresponds to 1–20; sequence MRRGWKMALSGGLRCCRRVL. A helical membrane pass occupies residues 21–41; the sequence is SWVPVLVIVLVVLWSYYAYVF. Residues 42 to 56 are Lumenal-facing; it reads ELCLVTVLSPAEKVI. A helical membrane pass occupies residues 57 to 77; the sequence is YLILYHAIFVFFAWTYWKSIF. The Cytoplasmic portion of the chain corresponds to 78 to 172; the sequence is TLPQQPNQKF…NNCIGFSNYK (95 aa). The DHHC domain maps to 129–179; sequence RFCDRCHLIKPDRCHHCSVCAMCVLKMDHHCPWVNNCIGFSNYKFFLQFLA. 7 residues coordinate Zn(2+): C131, C134, H144, C145, C148, C151, and H158. C159 serves as the catalytic S-palmitoyl cysteine intermediate. C165 provides a ligand contact to Zn(2+). The chain crosses the membrane as a helical span at residues 173-193; the sequence is FFLQFLAYSVLYCLYIATTVF. The Lumenal portion of the chain corresponds to 194-210; it reads SYFIKYWRGELPSVRSK. A helical transmembrane segment spans residues 211–234; that stretch reads FHVLFLLFVACMFFVSLVILFGYH. Residues 235-337 lie on the Cytoplasmic side of the membrane; it reads CWLVSRNKTT…SSSLAVESET (103 aa). The segment at 293 to 337 is disordered; that stretch reads HSFPMRSMNESQNPLLANEEPWEDNEDDSRDYPEGSSSLAVESET. Residues 312 to 321 show a composition bias toward acidic residues; it reads EPWEDNEDDS. Over residues 327-337 the composition is skewed to polar residues; it reads GSSSLAVESET.

This sequence belongs to the DHHC palmitoyltransferase family. Post-translationally, autopalmitoylated (in vitro). Expressed mainly in brain.

The protein localises to the golgi apparatus membrane. It localises to the postsynaptic density. The enzyme catalyses L-cysteinyl-[protein] + hexadecanoyl-CoA = S-hexadecanoyl-L-cysteinyl-[protein] + CoA. The catalysed reaction is L-cysteinyl-[protein] + tetradecanoyl-CoA = S-tetradecanoyl-L-cysteinyl-[protein] + CoA. It carries out the reaction L-cysteinyl-[protein] + octadecanoyl-CoA = S-octadecanoyl-L-cysteinyl-[protein] + CoA. Inhibited by 2-bromopalmitate. Functionally, palmitoyltransferase that catalyzes the addition of palmitate onto various protein substrates. Has no stringent fatty acid selectivity and in addition to palmitate can also transfer onto target proteins myristate from tetradecanoyl-CoA and stearate from octadecanoyl-CoA. Palmitoylates IGF2R and SORT1, promoting their partitioning to an endosomal membrane subdomain where they can interact with the retromer cargo-selective complex. Thereby, regulates retrograde transport from endosomes to the Golgi apparatus of these lysosomal sorting receptors and plays a role in trafficking of lysosomal proteins. In the nervous system, catalyzes the palmitoylation of DLG4/PSD95 and regulates its synaptic clustering and function in synaptogenesis. Could be involved in the differentiation of dopaminergic neurons and the development of the diencephalon. Could also catalyze the palmitoylation of GAP43. Could also palmitoylate DNAJC5 and regulate its localization to the Golgi membrane. Could also palmitoylate FYN as shown in vitro. May palmitoylate CALHM3 subunit of gustatory voltage-gated ion channels and modulate channel gating and kinetics. The polypeptide is Palmitoyltransferase ZDHHC15 (Mus musculus (Mouse)).